Here is a 1382-residue protein sequence, read N- to C-terminus: DNA-directed RNA polymerase subunit beta'' (1382 aa).

Residues cysteine 224, cysteine 294, cysteine 301, and cysteine 304 each coordinate Zn(2+).

The protein belongs to the RNA polymerase beta' chain family. RpoC2 subfamily. In terms of assembly, in plastids the minimal PEP RNA polymerase catalytic core is composed of four subunits: alpha, beta, beta', and beta''. When a (nuclear-encoded) sigma factor is associated with the core the holoenzyme is formed, which can initiate transcription. It depends on Zn(2+) as a cofactor.

The protein localises to the plastid. The protein resides in the chloroplast. The enzyme catalyses RNA(n) + a ribonucleoside 5'-triphosphate = RNA(n+1) + diphosphate. Functionally, DNA-dependent RNA polymerase catalyzes the transcription of DNA into RNA using the four ribonucleoside triphosphates as substrates. This is DNA-directed RNA polymerase subunit beta'' from Dioscorea elephantipes (Elephant's foot yam).